The primary structure comprises 197 residues: UPF0462 protein C4orf33 homolog (197 aa).

The protein belongs to the UPF0462 family.

This is UPF0462 protein C4orf33 homolog from Danio rerio (Zebrafish).